Reading from the N-terminus, the 1263-residue chain is Topoisomerase 1-associated factor 1 (1263 aa).

Disordered stretches follow at residues 1042 to 1098 (ERQL…DDSQ) and 1178 to 1263 (VEES…DEEE). The segment covering 1060-1071 (TKGKARKKSKEK) has biased composition (basic residues). The segment covering 1179–1189 (EESDNDDEVEE) has biased composition (acidic residues). Polar residues predominate over residues 1211-1226 (VDTQQDLSDNTSNTSD).

The protein belongs to the timeless family. In terms of assembly, component of the fork protection complex (FPC) consisting of TOF1 and CSM3.

The protein localises to the nucleus. Functionally, forms a fork protection complex (FPC) with CSM3 and which is required for chromosome segregation during meiosis and DNA damage repair. FPC coordinates leading and lagging strand synthesis and moves with the replication fork. FPC stabilizes replication forks in a configuration that is recognized by replication checkpoint sensors. This is Topoisomerase 1-associated factor 1 (YBL053) from Candida albicans (strain SC5314 / ATCC MYA-2876) (Yeast).